Here is a 189-residue protein sequence, read N- to C-terminus: Mediator of RNA polymerase II transcription subunit 30 (189 aa).

Positions 138-178 form a coiled coil; the sequence is SPESEDEIEKLEEQALSLRMEIAKKNVHVKELIDKLRELIA.

The protein belongs to the plant Mediator complex subunit 30 family. Component of the Mediator complex.

The protein resides in the nucleus. Functionally, component of the Mediator complex, a coactivator involved in the regulated transcription of nearly all RNA polymerase II-dependent genes. Mediator functions as a bridge to convey information from gene-specific regulatory proteins to the basal RNA polymerase II transcription machinery. The Mediator complex, having a compact conformation in its free form, is recruited to promoters by direct interactions with regulatory proteins and serves for the assembly of a functional preinitiation complex with RNA polymerase II and the general transcription factors. The sequence is that of Mediator of RNA polymerase II transcription subunit 30 (MED30) from Arabidopsis thaliana (Mouse-ear cress).